Consider the following 316-residue polypeptide: Adenine deaminase (316 aa).

Zn(2+)-binding residues include His-14, His-16, and His-194. Glu-197 functions as the Proton donor in the catalytic mechanism. Asp-275 serves as a coordination point for Zn(2+). Residue Asp-276 participates in substrate binding.

It belongs to the metallo-dependent hydrolases superfamily. Adenosine and AMP deaminases family. Adenine deaminase type 2 subfamily. Requires Zn(2+) as cofactor.

The enzyme catalyses adenine + H2O + H(+) = hypoxanthine + NH4(+). Its function is as follows. Catalyzes the hydrolytic deamination of adenine to hypoxanthine. Plays an important role in the purine salvage pathway and in nitrogen catabolism. This is Adenine deaminase from Stutzerimonas stutzeri (strain A1501) (Pseudomonas stutzeri).